The primary structure comprises 150 residues: Large ribosomal subunit protein uL13 (150 aa).

The protein belongs to the universal ribosomal protein uL13 family. As to quaternary structure, part of the 50S ribosomal subunit.

This protein is one of the early assembly proteins of the 50S ribosomal subunit, although it is not seen to bind rRNA by itself. It is important during the early stages of 50S assembly. The polypeptide is Large ribosomal subunit protein uL13 (Chlamydia abortus (strain DSM 27085 / S26/3) (Chlamydophila abortus)).